Consider the following 240-residue polypeptide: Ribonuclease PH (240 aa).

Residues R87 and 125 to 127 (GTR) each bind phosphate.

It belongs to the RNase PH family. In terms of assembly, homohexameric ring arranged as a trimer of dimers.

The catalysed reaction is tRNA(n+1) + phosphate = tRNA(n) + a ribonucleoside 5'-diphosphate. Phosphorolytic 3'-5' exoribonuclease that plays an important role in tRNA 3'-end maturation. Removes nucleotide residues following the 3'-CCA terminus of tRNAs; can also add nucleotides to the ends of RNA molecules by using nucleoside diphosphates as substrates, but this may not be physiologically important. Probably plays a role in initiation of 16S rRNA degradation (leading to ribosome degradation) during starvation. The sequence is that of Ribonuclease PH from Pseudomonas fluorescens (strain SBW25).